Consider the following 79-residue polypeptide: M-myrmicitoxin(01)-Tb1a (79 aa).

Positions 1 to 26 (MKLSFLSLVLAIILVMALMYTPHAEA) are cleaved as a signal peptide. Positions 27–56 (KAWADADADATAAADADADAVADALADAVA) are excised as a propeptide. Valine 76 is modified (valine amide).

The protein belongs to the formicidae venom precursor-01 superfamily. Post-translationally, the C-terminal amidation is important for antimicrobial activity, since a non-amidated synthetic peptide shows a reduced antimicrobial activity (2-20-fold depending on the strain tested). The amidation may play a positive role in the peptide conformation, since amidated peptide shows an increase of about 5% of helical content. In terms of tissue distribution, expressed by the venom gland.

It is found in the secreted. Its subcellular location is the target cell membrane. In terms of biological role, antimicrobial peptide that shows antimicrobial activities against all microorganisms tested with minimal inhibitory concentrations (MICs) values ranging from 0.45 to 97.5 umol/L. This peptide kills the microorganisms by permeabilizating the membranes. It shows a very weak hemolytic activity (HC(50)=325 umol/L) and weak cytotoxicity against human lymphocytes (LC(50)=67.8 umol/L). Gram-negative bacteria tested are E.coli (MIC=24.4 umol/L), C.sakazakii (MIC=5.8 umol/L), P.aeruginosa (MIC=8.7-12.2 umol/L), S.enterica (MIC=5.4 umol/L), and H.pylori (MIC=0.99-3.9 umol/L). Gram-positive bacteria tested are E.hirae (MIC=12.2 umol/L), S.aureus (MIC=3.0-6.4 umol/L), methicillin-resistant S.aureus (MRSA) (MIC=8.7 umol/L), S.xylosus (MIC=0.45-1.3 umol/L), and B.subtilis (MIC=24.4 umol/L). Fungi tested are A.niger (MIC=0.75 umol/L), C.albicans (MIC=17.3 umol/L), G.candidum (MIC=97.5 umol/L), and S.cerevisiae (MIC=6.1 umol/L). Finally the parasite tested is L.infantum (MIC=1.5 umol/L). This is M-myrmicitoxin(01)-Tb1a from Tetramorium bicarinatum (Tramp ant).